Reading from the N-terminus, the 362-residue chain is Vignain (362 aa).

Residues 1–20 (MAMKKLLWVVLSLSLVLGVA) form the signal peptide. A propeptide spans 21-126 (NSFDFHEKDL…SGTFMYEKVG (106 aa)) (activation peptide). 3 cysteine pairs are disulfide-bonded: Cys-149/Cys-191, Cys-183/Cys-224, and Cys-282/Cys-334. Residue Cys-152 is part of the active site. Residues His-288 and Asn-309 contribute to the active site. N-linked (GlcNAc...) asparagine glycosylation is found at Asn-326 and Asn-346. A propeptide spans 353-362 (GSLSSPKDEL) (removed in mature form). The short motif at 359-362 (KDEL) is the Prevents secretion from ER element.

It belongs to the peptidase C1 family. The mature protein is not glycosylated. Post-translationally, the precursor stored in the endoplasmic reticulum lumen is processed during the transport to proteins bodies to two dominant mature forms that differ by a single amino acid residue at the N-terminus.

The protein resides in the endoplasmic reticulum lumen. It localises to the vacuole. Its subcellular location is the aleurone grain. Functionally, thought to be involved in the hydrolysis of stored seed proteins. In vitro, catalyzes the hydrolysis of proteins, such as azocasein. Shows a preferential cleavage for Asn-|-Xaa in small molecule substrates such as Boc-Asn-|-OPHNO(2). This is Vignain from Vigna mungo (Black gram).